Consider the following 388-residue polypeptide: Na(+)/H(+) antiporter NhaA (388 aa).

Residues 1–11 (MKHLHRFFSSD) are Cytoplasmic-facing. A helical membrane pass occupies residues 12–31 (ASGGIILIIAAILAMMMANS). The Periplasmic segment spans residues 32 to 58 (GATSGWYHDFLETPVQLRVGSLEINKN). A helical membrane pass occupies residues 59-80 (MLLWINDALMAVFFLLVGLEVK). Residues 81 to 96 (RELMQGSLASLRQAAF) are Cytoplasmic-facing. A helical transmembrane segment spans residues 97-116 (PVIAAIGGMIVPALLYLAFN). Residues 117–122 (YADPIT) are Periplasmic-facing. A helical membrane pass occupies residues 123–130 (REGWAIPA). Topologically, residues 131 to 154 (ATDIAFALGVLALLGSRVPLALKI) are cytoplasmic. Residues 155–176 (FLMALAIIDDLGAIIIIALFYT) traverse the membrane as a helical segment. Topologically, residues 177-180 (NDLS) are periplasmic. The chain crosses the membrane as a helical span at residues 181 to 200 (MASLGVAAVAIAVLAVLNLC). Residues 201–204 (GVRR) lie on the Cytoplasmic side of the membrane. The helical transmembrane segment at 205–222 (TGVYILVGVVLWTAVLKS) threads the bilayer. Gly223 is a topological domain (periplasmic). Residues 224-236 (VHATLAGVIVGFF) traverse the membrane as a helical segment. The Cytoplasmic portion of the chain corresponds to 237–253 (IPLKEKHGRSPAKRLEH). Residues 254–272 (VLHPWVAYLILPLFAFANA) traverse the membrane as a helical segment. Topologically, residues 273 to 286 (GVSLQGVTLDGLTS) are periplasmic. Residues 287-310 (ILPLGIIAGLLIGKPLGISLFCWL) traverse the membrane as a helical segment. Residues 311–339 (ALRLKLAHLPEGTTYQQIMAVGILCGIGF) lie on the Cytoplasmic side of the membrane. A helical transmembrane segment spans residues 340-350 (TMSIFIASLAF). At 351 to 357 (GSVDPEL) the chain is on the periplasmic side. The chain crosses the membrane as a helical span at residues 358 to 380 (INWAKLGILVGSISSAVIGYSWL). Residues 381 to 388 (RVRLRPSV) are Cytoplasmic-facing.

It belongs to the NhaA Na(+)/H(+) (TC 2.A.33) antiporter family.

The protein resides in the cell inner membrane. It carries out the reaction Na(+)(in) + 2 H(+)(out) = Na(+)(out) + 2 H(+)(in). In terms of biological role, na(+)/H(+) antiporter that extrudes sodium in exchange for external protons. The polypeptide is Na(+)/H(+) antiporter NhaA (Shigella boydii serotype 4 (strain Sb227)).